The chain runs to 123 residues: UPF0738 protein BCG9842_B4089 (123 aa).

This sequence belongs to the UPF0738 family.

This chain is UPF0738 protein BCG9842_B4089, found in Bacillus cereus (strain G9842).